The following is a 351-amino-acid chain: Ion-translocating oxidoreductase complex subunit D (351 aa).

4 helical membrane passes run 20–40, 44–64, 89–109, and 123–143; these read IMLW…YFFG, LIQV…TLSL, LPPL…IIIA, and PAMI…TSWL. At threonine 187 the chain carries FMN phosphoryl threonine. Transmembrane regions (helical) follow at residues 215–235, 244–264, 267–287, 301–321, and 322–342; these read LSGI…LFLL, IPVS…IIAP, FAQP…FFIA, LIFG…GGYP, and DGVA…DYYT.

This sequence belongs to the NqrB/RnfD family. The complex is composed of six subunits: RnfA, RnfB, RnfC, RnfD, RnfE and RnfG. FMN is required as a cofactor.

Its subcellular location is the cell inner membrane. Its function is as follows. Part of a membrane-bound complex that couples electron transfer with translocation of ions across the membrane. This is Ion-translocating oxidoreductase complex subunit D from Pectobacterium atrosepticum (strain SCRI 1043 / ATCC BAA-672) (Erwinia carotovora subsp. atroseptica).